The chain runs to 402 residues: Multidrug resistance protein MdtH (402 aa).

Topologically, residues 1–12 are cytoplasmic; it reads MSRVSQARNLGK. A helical membrane pass occupies residues 13–33; that stretch reads YFLLIDNMLVVLGFFVVFPLI. The Periplasmic segment spans residues 34–98; that stretch reads SIRFVDQMGW…GFATMGIAHE (65 aa). The helical transmembrane segment at 99–116 threads the bilayer; sequence PWLLWFSCFLSGLGGTLF. Topologically, residues 117–138 are cytoplasmic; it reads DPPRSALVVKLIRPEQRDRFFS. Residues 139–159 traverse the membrane as a helical segment; that stretch reads LLMMQDSAGAVIGALLGSWLL. Topologically, residues 160–164 are periplasmic; it reads QYDFR. A helical membrane pass occupies residues 165–185; sequence LVCATGAILFILCALFNAWLL. Topologically, residues 186–213 are cytoplasmic; sequence PAWKLSTVRTPVREGMRRVMSDKRFVTY. The helical transmembrane segment at 214–234 threads the bilayer; sequence VLTLAGYYMLAVQVMLMLPIM. Over 235-243 the chain is Periplasmic; that stretch reads VNDIAGSPA. A helical membrane pass occupies residues 244–264; sequence AVKWMYAIEACLSLTLLYPIA. The Cytoplasmic segment spans residues 265–276; it reads RWSEKRFRLEHR. Residues 277-297 form a helical membrane-spanning segment; that stretch reads LMAGLLVMSLSMLPIGMVGNL. Residues 298–299 are Periplasmic-facing; it reads QQ. The helical transmembrane segment at 300–320 threads the bilayer; the sequence is LFTLICAFYIGSVIAEPARET. Over 321-339 the chain is Cytoplasmic; the sequence is LSASLADARARGSYMGFSR. A helical membrane pass occupies residues 340-360; it reads LGLAIGGAIGYIGGGWLFDMG. At 361–367 the chain is on the periplasmic side; the sequence is KALAQPE. The helical transmembrane segment at 368-388 threads the bilayer; that stretch reads LPWMMLGIIGFITFLALGWQF. Over 389-402 the chain is Cytoplasmic; the sequence is SHKRTPRRMLEPGA.

It belongs to the major facilitator superfamily. DHA1 family. MdtH (TC 2.A.1.2.21) subfamily.

It localises to the cell inner membrane. This chain is Multidrug resistance protein MdtH, found in Salmonella typhimurium (strain LT2 / SGSC1412 / ATCC 700720).